The sequence spans 623 residues: DNA-directed RNA polymerase subunit gamma (623 aa).

Residues C70, C72, C85, and C88 each contribute to the Zn(2+) site. Mg(2+)-binding residues include D466, D468, and D470.

Belongs to the RNA polymerase beta' chain family. RpoC1 subfamily. As to quaternary structure, in cyanobacteria the RNAP catalytic core is composed of 2 alpha, 1 beta, 1 beta', 1 gamma and 1 omega subunit. When a sigma factor is associated with the core the holoenzyme is formed, which can initiate transcription. The cofactor is Mg(2+). Zn(2+) serves as cofactor.

The catalysed reaction is RNA(n) + a ribonucleoside 5'-triphosphate = RNA(n+1) + diphosphate. DNA-dependent RNA polymerase catalyzes the transcription of DNA into RNA using the four ribonucleoside triphosphates as substrates. This is DNA-directed RNA polymerase subunit gamma from Acaryochloris marina (strain MBIC 11017).